Here is a 545-residue protein sequence, read N- to C-terminus: Chaperonin GroEL (545 aa).

ATP contacts are provided by residues 29–32 (TLGP), lysine 50, 86–90 (DGTTT), glycine 415, and aspartate 495.

It belongs to the chaperonin (HSP60) family. As to quaternary structure, forms a cylinder of 14 subunits composed of two heptameric rings stacked back-to-back. Interacts with the co-chaperonin GroES.

It localises to the cytoplasm. The catalysed reaction is ATP + H2O + a folded polypeptide = ADP + phosphate + an unfolded polypeptide.. In terms of biological role, together with its co-chaperonin GroES, plays an essential role in assisting protein folding. The GroEL-GroES system forms a nano-cage that allows encapsulation of the non-native substrate proteins and provides a physical environment optimized to promote and accelerate protein folding. The sequence is that of Chaperonin GroEL from Bacteroides thetaiotaomicron (strain ATCC 29148 / DSM 2079 / JCM 5827 / CCUG 10774 / NCTC 10582 / VPI-5482 / E50).